The chain runs to 296 residues: Protein csh3 (296 aa).

The segment at 46–138 (ASPVTAPAAQ…PPSYPGPNTA (93 aa)) is disordered. Basic and acidic residues predominate over residues 93 to 103 (GEKRTPEEPRK). A compositionally biased stretch (polar residues) spans 111–124 (QKQSEASSVNSSTE). Residues 140–199 (KNVERVLAMYDFPGPDAGDLGFHAGEVIIVLEHVNNDWWRGELNGKEGIFPSNYVRLLED) form the SH3 domain. The tract at residues 202-246 (VKAQPPPPPPQQNYPPAASSSAPPMQYQQTAYPPQQAPYPPVQAY) is disordered. Positions 205 to 214 (QPPPPPPQQN) are enriched in pro residues. Positions 215 to 235 (YPPAASSSAPPMQYQQTAYPP) are enriched in low complexity.

In Schizosaccharomyces pombe (strain 972 / ATCC 24843) (Fission yeast), this protein is Protein csh3 (csh3).